The primary structure comprises 544 residues: MNQSKRILRTVYLSLFLIGLFMLINDIFSSWMLGSKSSDKELQFDLNKSFDDNKMLLSKSNNFNLIDKAQDIIVETGIYFATFSTFRGNLVSLKLKNHLNLEKDPTDLINVDYKNEPFFDVSFDYLVEDLFLYKKIDDFNHEFKAYFKNNGKTYEYVKKYTFSKKNEYLMRFEVIVNGLEDYNLLDIDSYKITFSSQIERLSDKAKLQYNNYLSQIIYYDNKLKYGKDDLRINNPKWIGSSTKYFEVLVSKENMEVEFKKEKGILKSFIVNNVINKKNISDKFFIYAGPKDNRYLDIFDKNSDNTFGLSDIAFGMSVEKSLWYLIQVPMQMVMQVFYDVIPNWGLSIIFLTIVVRILIFPLTFKGFRATAELSKLQPKMKELQVKFKHDPKKLNEEMGRLYKEEGVNPLGGCFPIILQLPIFFALYSLVNNLFLLRGANFIPGWIDDLSIGDSVYHFGYKLYFVSWTDIRILPFIMMFTQLGSTIVSSNIDLKNLGAQQKFLYFGMPIMFFFILYNMPSGLLIYWITTNIFTILQQYYIKMHLS.

Helical transmembrane passes span 13-33 (LSLF…SWML), 321-341 (LWYL…DVIP), 343-363 (WGLS…PLTF), 409-429 (LGGC…YSLV), 461-481 (LYFV…FTQL), and 506-526 (MPIM…IYWI).

The protein belongs to the OXA1/ALB3/YidC family. Type 1 subfamily. Interacts with the Sec translocase complex via SecD. Specifically interacts with transmembrane segments of nascent integral membrane proteins during membrane integration.

Its subcellular location is the cell inner membrane. Required for the insertion and/or proper folding and/or complex formation of integral membrane proteins into the membrane. Involved in integration of membrane proteins that insert both dependently and independently of the Sec translocase complex, as well as at least some lipoproteins. Aids folding of multispanning membrane proteins. The chain is Membrane protein insertase YidC from Borreliella afzelii (strain PKo) (Borrelia afzelii).